A 400-amino-acid polypeptide reads, in one-letter code: Plasminogen activator inhibitor 1 (400 aa).

An N-terminal signal peptide occupies residues 1 to 21 (MQMSTVCLALGLALVFGEASA). N-linked (GlcNAc...) asparagine glycans are attached at residues Asn-230, Asn-286, and Asn-350.

This sequence belongs to the serpin family. As to quaternary structure, forms a heterodimer with TMPRSS7. Interacts with VTN. Binds LRP1B; binding is followed by internalization and degradation. Interacts with PPP1CB. In complex with PLAU/uPA, interacts with PLAUR/uPAR. Interacts with SORL1 and LRP1, either alone or in complex with PLAU; these interactions are abolished in the presence of LRPAP1/RAP. The ternary complex composed of PLAUR-PLAU-PAI1 also interacts with SORL1. Interacts with PLAT/tPA. Also interacts with SORL1, when complexed to PLAT/tPA.

Its subcellular location is the secreted. Functionally, serine protease inhibitor. Inhibits TMPRSS7. Is a primary inhibitor of tissue-type plasminogen activator (PLAT) and urokinase-type plasminogen activator (PLAU). As PLAT inhibitor, it is required for fibrinolysis down-regulation and is responsible for the controlled degradation of blood clots. As PLAU inhibitor, it is involved in the regulation of cell adhesion and spreading. Acts as a regulator of cell migration, independently of its role as protease inhibitor. It is required for stimulation of keratinocyte migration during cutaneous injury repair. It is involved in cellular and replicative senescence. Plays a role in alveolar type 2 cells senescence in the lung. Is involved in the regulation of cementogenic differentiation of periodontal ligament stem cells, and regulates odontoblast differentiation and dentin formation during odontogenesis. This chain is Plasminogen activator inhibitor 1 (SERPINE1), found in Neovison vison (American mink).